Here is a 99-residue protein sequence, read N- to C-terminus: Keratinocyte differentiation-associated protein (99 aa).

A signal peptide spans 1 to 22; it reads MKIPVLPAVVLLSLLVLHSAQG.

As to expression, highly expressed in skin and detected at lower levels in thymus. In skin, found exclusively in lamellar granules of granular keratinocytes and in the intracellular space of the stratum corneum. Also highly expressed in oral mucosa, tongue, esophagus, and stomach, and at much lower levels in bladder and uterus. Not detected in gastrointestinal mucosa.

Its subcellular location is the secreted. Functionally, may act as a soluble regulator of keratinocyte differentiation. May play an important role in embryonic skin morphogenesis. The chain is Keratinocyte differentiation-associated protein (KRTDAP) from Homo sapiens (Human).